Here is a 434-residue protein sequence, read N- to C-terminus: Probable tRNA pseudouridine synthase D (434 aa).

Asp-93 (nucleophile) is an active-site residue. One can recognise a TRUD domain in the interval 169–396; sequence GTPNYFGQQR…SAGSRRAILL (228 aa).

It belongs to the pseudouridine synthase TruD family.

The catalysed reaction is uridine(13) in tRNA = pseudouridine(13) in tRNA. Its function is as follows. Could be responsible for synthesis of pseudouridine from uracil-13 in transfer RNAs. The protein is Probable tRNA pseudouridine synthase D of Halobacterium salinarum (strain ATCC 29341 / DSM 671 / R1).